Consider the following 429-residue polypeptide: MTLMEECRRTVPDTVRKIAEEEGVRPEKLARRVAEGRVVVPAHADRRDEVRPVGIGEGLRVKINANVGTSPEVCDPDLEVEKARAAVDHGADTVMDLSTGGDLREIRRRIMKAVDVPVGTVPVYEAAVEMTRRGRAVVDMDEDDMLRAIERHMEDGVDFMTVHCAVTLDALEDVLRRGRALGIVSRGGAIVAAWMIHHDAENPLYENFDYILELAREHDVTLSLGDAMRPGSVLDANDAAQHRELVVQGELVDRCREAGVQAMVEGPGHVPLDQIPAVVRLQKRVCDGAPFYVLGPVPTDVAPGYDHIAAAIGGAIAAYHGADFLCYVTPAEHLALPDVKDVILGVIATRIAAHAADTARGMKYARRENEEMAEARWNLDWDRQFELAIDPKKPRHYREERPPQAKELCSMCGEYCAIKILKDALEERR.

Residues N66, M95, Y124, H163, 185–187, 226–229, and E265 each bind substrate; these read SRG and DAMR. H269 serves as a coordination point for Zn(2+). A substrate-binding site is contributed by Y292. Residue H333 participates in Zn(2+) binding. Positions 409, 412, and 416 each coordinate [4Fe-4S] cluster.

It belongs to the ThiC family. [4Fe-4S] cluster serves as cofactor.

The enzyme catalyses 5-amino-1-(5-phospho-beta-D-ribosyl)imidazole + S-adenosyl-L-methionine = 4-amino-2-methyl-5-(phosphooxymethyl)pyrimidine + CO + 5'-deoxyadenosine + formate + L-methionine + 3 H(+). Its pathway is cofactor biosynthesis; thiamine diphosphate biosynthesis. In terms of biological role, catalyzes the synthesis of the hydroxymethylpyrimidine phosphate (HMP-P) moiety of thiamine from aminoimidazole ribotide (AIR) in a radical S-adenosyl-L-methionine (SAM)-dependent reaction. The sequence is that of Phosphomethylpyrimidine synthase from Methanopyrus kandleri (strain AV19 / DSM 6324 / JCM 9639 / NBRC 100938).